The primary structure comprises 91 residues: Putative defensin-like protein 221 (91 aa).

A signal peptide spans 1 to 19 (MKTLFFFLTIAVLVSSCTS). 3 cysteine pairs are disulfide-bonded: C61-C78, C64-C83, and C68-C85.

Belongs to the DEFL family.

Its subcellular location is the secreted. The chain is Putative defensin-like protein 221 from Arabidopsis thaliana (Mouse-ear cress).